Here is a 257-residue protein sequence, read N- to C-terminus: Zinc transporter ZupT (257 aa).

A run of 3 helical transmembrane segments spans residues 5–25, 32–52, and 61–81; these read LILT…GVLG, VLAF…LMEM, and GMSP…YFGL. 2 residues coordinate Fe(2+): asparagine 120 and glutamate 123. Residues glutamate 123 and histidine 148 each contribute to the Zn(2+) site. Fe(2+) contacts are provided by asparagine 149, glutamate 152, and glutamate 181. A Zn(2+)-binding site is contributed by glutamate 152. The next 3 helical transmembrane spans lie at 182–202, 203–223, and 236–256; these read IFGG…IVMA, AIMA…LMPL, and GVLC…TIGI.

This sequence belongs to the ZIP transporter (TC 2.A.5) family. ZupT subfamily.

Its subcellular location is the cell inner membrane. The catalysed reaction is Zn(2+)(in) = Zn(2+)(out). Its function is as follows. Mediates zinc uptake. May also transport other divalent cations. The sequence is that of Zinc transporter ZupT from Salmonella arizonae (strain ATCC BAA-731 / CDC346-86 / RSK2980).